The following is a 104-amino-acid chain: Precursor of CEP11 (104 aa).

Residues 1–27 (MAKTRRVIYLFLTIVLLFCELIDEAQG) form the signal peptide. A propeptide spanning residues 28-85 (SRFRCHHSEDYSCKKRSSHHHHHHHHHQQQQHHHKDTPPEELQGSIKTRRSKDIYGLN) is cleaved from the precursor. Positions 37–104 (DYSCKKRSSH…SPGVGHLIKT (68 aa)) are disordered. Residues 41–62 (KKRSSHHHHHHHHHQQQQHHHK) are compositionally biased toward basic residues. Residues proline 92 and proline 96 each carry the hydroxyproline modification. The propeptide occupies 101 to 104 (LIKT).

It belongs to the C-terminally encoded plant signaling peptide (CEP) family. As to quaternary structure, interacts with CEP receptors (e.g. CEPR1 and CEPR2). In terms of processing, the mature small signaling peptide is generated by proteolytic processing of the longer precursor. As to expression, expressed in lateral root primordia and in lateral roots excluding the meristem region.

The protein localises to the secreted. The protein resides in the extracellular space. It is found in the apoplast. Functionally, extracellular signaling peptide that may regulate primary root growth rate and systemic nitrogen (N)-demand signaling. Mediates up-regulation of genes involved in N uptake and assimilation pathways. In Arabidopsis thaliana (Mouse-ear cress), this protein is Precursor of CEP11.